A 225-amino-acid polypeptide reads, in one-letter code: Large ribosomal subunit protein bL25 (225 aa).

A disordered region spans residues 197-225; that stretch reads PQREEQMEDTDTAAADEEGDKEEDADKQE. Residues 202–225 are compositionally biased toward acidic residues; that stretch reads QMEDTDTAAADEEGDKEEDADKQE.

Belongs to the bacterial ribosomal protein bL25 family. CTC subfamily. Part of the 50S ribosomal subunit; part of the 5S rRNA/L5/L18/L25 subcomplex. Contacts the 5S rRNA. Binds to the 5S rRNA independently of L5 and L18.

This is one of the proteins that binds to the 5S RNA in the ribosome where it forms part of the central protuberance. The sequence is that of Large ribosomal subunit protein bL25 from Dichelobacter nodosus (strain VCS1703A).